A 198-amino-acid polypeptide reads, in one-letter code: Segregation and condensation protein B (198 aa).

Residues 167–198 (PKLADPEADDPDQNEMDLFFDRFNQSKEQEEE) are disordered. A compositionally biased stretch (acidic residues) spans 172-181 (PEADDPDQNE).

Belongs to the ScpB family. In terms of assembly, homodimer. Homodimerization may be required to stabilize the binding of ScpA to the Smc head domains. Component of a cohesin-like complex composed of ScpA, ScpB and the Smc homodimer, in which ScpA and ScpB bind to the head domain of Smc. The presence of the three proteins is required for the association of the complex with DNA.

The protein localises to the cytoplasm. Functionally, participates in chromosomal partition during cell division. May act via the formation of a condensin-like complex containing Smc and ScpA that pull DNA away from mid-cell into both cell halves. The protein is Segregation and condensation protein B of Listeria welshimeri serovar 6b (strain ATCC 35897 / DSM 20650 / CCUG 15529 / CIP 8149 / NCTC 11857 / SLCC 5334 / V8).